The following is a 398-amino-acid chain: Cobalamin import ATP-binding protein BtuD (398 aa).

In terms of domain architecture, ABC transporter spans 3 to 237 (LDVTGLDVEL…DTIRAAFDAR (235 aa)). 35-42 (GPNGAGKS) is a binding site for ATP.

The protein belongs to the ABC transporter superfamily. As to quaternary structure, the complex is composed of two ATP-binding proteins (BtuD), two transmembrane proteins (BtuC) and a solute-binding protein (BtuF).

The protein localises to the cell membrane. It carries out the reaction an R-cob(III)alamin(out) + ATP + H2O = an R-cob(III)alamin(in) + ADP + phosphate + H(+). Its function is as follows. Required for corrinoid utilization. Probably part of the ABC transporter complex BtuCDF involved in cobalamin (vitamin B12) import. Probably responsible for energy coupling to the transport system. The sequence is that of Cobalamin import ATP-binding protein BtuD (btuD) from Halobacterium salinarum (strain ATCC 29341 / DSM 671 / R1).